Here is a 296-residue protein sequence, read N- to C-terminus: F-box only protein 2 (296 aa).

Positions 1 to 41 (MDGDGDPESVGQPEEASPEEQPEEASAEEERPEDQQEEEAA) are disordered. Over residues 16–40 (ASPEEQPEEASAEEERPEDQQEEEA) the composition is skewed to acidic residues. In terms of domain architecture, F-box spans 44 to 91 (AAYLDELPEPLLLRVLAALPAAELVQACRLVCLRWKELVDGAPLWLLK). The region spanning 113–296 (FYFLSKRRRN…VTNSSVWVEP (184 aa)) is the FBA domain. A carbohydrate contacts are provided by residues 210 to 212 (RSD) and 278 to 279 (YW).

As to quaternary structure, component of the SCF(FBXO2) complex consisting of CUL1, RBX1, SKP1 and FBXO2. Predominantly detected as heterodimer with SKP1; the heterodimer with SKP1 is not part of the SCF(FBXO2) complex.

It is found in the cytoplasm. It localises to the microsome membrane. It functions in the pathway protein modification; protein ubiquitination. In terms of biological role, substrate recognition component of a SCF (SKP1-CUL1-F-box protein) E3 ubiquitin-protein ligase complex that mediates the ubiquitination and subsequent proteasomal degradation of target proteins. Involved in the endoplasmic reticulum-associated degradation pathway (ERAD) for misfolded lumenal proteins by recognizing and binding sugar chains on unfolded glycoproteins that are retrotranslocated into the cytosol and promoting their ubiquitination and subsequent degradation. Prevents formation of cytosolic aggregates of unfolded glycoproteins that have been retrotranslocated into the cytosol. Able to recognize and bind denatured glycoproteins, preferentially those of the high-mannose type. The protein is F-box only protein 2 (FBXO2) of Homo sapiens (Human).